The sequence spans 82 residues: RNA-binding protein Hfq (82 aa).

Residues 10-70 (DAFLNQVRKD…ISTVAPLRPI (61 aa)) enclose the Sm domain.

It belongs to the Hfq family. In terms of assembly, homohexamer.

Functionally, RNA chaperone that binds small regulatory RNA (sRNAs) and mRNAs to facilitate mRNA translational regulation in response to envelope stress, environmental stress and changes in metabolite concentrations. Also binds with high specificity to tRNAs. The polypeptide is RNA-binding protein Hfq (Syntrophomonas wolfei subsp. wolfei (strain DSM 2245B / Goettingen)).